Reading from the N-terminus, the 368-residue chain is Ferrochelatase (368 aa).

Fe cation-binding residues include His209 and Glu290.

Belongs to the ferrochelatase family.

The protein resides in the cytoplasm. It catalyses the reaction heme b + 2 H(+) = protoporphyrin IX + Fe(2+). Its pathway is porphyrin-containing compound metabolism; protoheme biosynthesis; protoheme from protoporphyrin-IX: step 1/1. Its function is as follows. Catalyzes the ferrous insertion into protoporphyrin IX. The polypeptide is Ferrochelatase (Herminiimonas arsenicoxydans).